A 217-amino-acid polypeptide reads, in one-letter code: Ran-binding protein 1 homolog b (217 aa).

2 disordered regions span residues 1–32 (MASI…QVAP) and 160–217 (ESEE…VPSA). Position 2 is an N-acetylalanine (Ala-2). The span at 14–26 (DEEETGANEDEDT) shows a compositional bias: acidic residues. The region spanning 29-164 (QVAPIVRLEE…FKEVAESEEE (136 aa)) is the RanBD1 domain. A compositionally biased stretch (basic and acidic residues) spans 181–217 (LTVEEKESEKKPVEKAEENKKSEAVEEKKTEESVPSA).

Interacts with the GTP-bound form of RAN1, RAN2 and RAN3.

The protein localises to the nucleus. Its subcellular location is the nuclear pore complex. This Arabidopsis thaliana (Mouse-ear cress) protein is Ran-binding protein 1 homolog b (RANBP1B).